The primary structure comprises 217 residues: Peroxiredoxin (217 aa).

Residues 2 to 159 (VVIGEKFPEV…VVRLVKALQT (158 aa)) enclose the Thioredoxin domain. The active-site Cysteine sulfenic acid (-SOH) intermediate is Cys-46. A substrate-binding site is contributed by Arg-122.

Belongs to the peroxiredoxin family. Prx6 subfamily. Homodecamer. Pentamer of dimers that assemble into a ring structure.

The protein localises to the cytoplasm. It carries out the reaction a hydroperoxide + [thioredoxin]-dithiol = an alcohol + [thioredoxin]-disulfide + H2O. Its function is as follows. Thiol-specific peroxidase that catalyzes the reduction of hydrogen peroxide and organic hydroperoxides to water and alcohols, respectively. Plays a role in cell protection against oxidative stress by detoxifying peroxides. The protein is Peroxiredoxin of Methanococcus maripaludis (strain C5 / ATCC BAA-1333).